Reading from the N-terminus, the 691-residue chain is Solute carrier family 28 member 3 (691 aa).

Residues 1 to 78 are disordered; it reads MELRSTAAPR…HMEDDDEEMQ (78 aa). The Cytoplasmic segment spans residues 1 to 102; it reads MELRSTAAPR…FCRKHKTTLR (102 aa). Residues 21 to 30 are compositionally biased toward low complexity; that stretch reads NEENFLENEN. Residues 31-42 are compositionally biased toward polar residues; that stretch reads TSGNNSIRSRAV. Residues 43–54 are compositionally biased toward basic and acidic residues; sequence QSREHTNTKQDE. A helical transmembrane segment spans residues 103 to 123; it reads HIIWGILLAGYLVMVISACVL. Residues 124–128 are Extracellular-facing; the sequence is NFHRA. Residues 129–149 traverse the membrane as a helical segment; sequence LPLFVITVAAIFFVVWDHLMA. The Cytoplasmic portion of the chain corresponds to 150 to 173; sequence KYEHRIDEMLSPGRRLLNSHWFWL. The chain crosses the membrane as a helical span at residues 174 to 194; that stretch reads KWVIWSSLVLAVIFWLAFDTA. At 195 to 197 the chain is on the extracellular side; the sequence is KLG. Residues 198 to 219 form a helical membrane-spanning segment; sequence QQQLVSFGGLIMYIVLLFLFSK. Residues 220-227 lie on the Cytoplasmic side of the membrane; it reads YPTRVYWR. The chain crosses the membrane as a helical span at residues 228–247; sequence PVLWGIGLQFLLGLLILRTD. Over 248-284 the chain is Extracellular; that stretch reads PGFIAFDWLGRQVQTFLEYTDAGASFVFGEKYKDHFF. A helical membrane pass occupies residues 285-305; the sequence is AFKVLPIVVFFSTVMSMLYYL. Residues 306 to 329 lie on the Cytoplasmic side of the membrane; that stretch reads GLMQWIIRKVGWIMLVTTGSSPIE. The segment at residues 330–348 is an intramembrane region (helical); that stretch reads SVVASGNIFVGQTESPLLV. At 349–361 the chain is on the cytoplasmic side; that stretch reads RPYLPYITKSELH. The helical transmembrane segment at 362-384 threads the bilayer; the sequence is AIMTAGFSTIAGSVLGAYISFGV. Over 385–386 the chain is Extracellular; that stretch reads PS. The helical transmembrane segment at 387–408 threads the bilayer; sequence SHLLTASVMSAPASLAAAKLFW. Topologically, residues 409–443 are cytoplasmic; the sequence is PETEKPKITLKNAMKMESGDSGNLLEAATQGASSS. A helical transmembrane segment spans residues 444–469; sequence ISLVANIAVNLIAFLALLSFMNSALS. Topologically, residues 470 to 507 are extracellular; that stretch reads WFGNMFDYPQLSFELICSYIFMPFSFMMGVEWQDSFMV. The helical intramembrane region spans 508–527; it reads ARLIGYKTFFNEFVAYEHLS. Topologically, residues 528-566 are extracellular; sequence KWIHLRKEGGPKFVNGVQQYISIRSEIIATYALCGFANI. Residues 567-577 traverse the membrane as a helical segment; the sequence is GSLGIVIGGLT. At 578-590 the chain is on the cytoplasmic side; sequence SMAPSRKRDIASG. The chain crosses the membrane as a helical span at residues 591–613; it reads AVRALIAGTVACFMTACIAGILS. At 614–691 the chain is on the extracellular side; sequence STPVDINCHH…FNCNGISNTF (78 aa).

It belongs to the concentrative nucleoside transporter (CNT) (TC 2.A.41) family. In terms of assembly, homotrimer. Expressed in pancreas, bone marrow, trachea, mammary gland, liver, prostate, and regions of intestine, brain, lung, placenta, testis, kidney, and heart.

It is found in the cell membrane. Its subcellular location is the endoplasmic reticulum membrane. The catalysed reaction is thymidine(out) + 2 Na(+)(out) = thymidine(in) + 2 Na(+)(in). It catalyses the reaction cytidine(out) + 2 Na(+)(out) = cytidine(in) + 2 Na(+)(in). The enzyme catalyses uridine(out) + 2 Na(+)(out) = uridine(in) + 2 Na(+)(in). It carries out the reaction adenosine(out) + 2 Na(+)(out) = adenosine(in) + 2 Na(+)(in). The catalysed reaction is guanosine(out) + 2 Na(+)(out) = guanosine(in) + 2 Na(+)(in). It catalyses the reaction inosine(out) + 2 Na(+)(out) = inosine(in) + 2 Na(+)(in). Functionally, sodium-dependent, pyrimidine- and purine-selective. Involved in the homeostasis of endogenous nucleosides. Exhibits the transport characteristics of the nucleoside transport system cib or N3 subtype (N3/cib) (with marked transport of both thymidine and inosine). Employs a 2:1 sodium/nucleoside ratio. Transports uridine. Also able to transport gemcitabine, 3'-azido-3'-deoxythymidine (AZT), ribavirin and 3-deazauridine. This is Solute carrier family 28 member 3 (SLC28A3) from Homo sapiens (Human).